The primary structure comprises 338 residues: Solute carrier family 35 member G3 (338 aa).

Positions 1 to 24 are disordered; sequence MAGSHPYFNQPDSTHPSPPSAPPS. The next 9 helical transmembrane spans lie at 37–57, 67–87, 105–125, 160–180, 190–210, 221–241, 250–270, 281–301, and 305–325; these read TSGL…VGPL, LPSL…ALLL, FFCA…VQVV, CGLL…LWTL, ALGY…LLVY, TVAF…LFVL, LLSW…FTCV, LVCA…YYML, and VAPS…IITA. In terms of domain architecture, EamA 1 spans 49 to 174; sequence LPAGFVGPLS…CILGLIIIVG (126 aa). The 54-residue stretch at 272 to 325 folds into the EamA 2 domain; that stretch reads YAVTKAHPALVCAVLHSEVVVALILQYYMLHETVAPSDIMGAGVALGSIAIITA.

It belongs to the SLC35G solute transporter family.

It is found in the membrane. In Pan paniscus (Pygmy chimpanzee), this protein is Solute carrier family 35 member G3 (SLC35G3).